The following is a 208-amino-acid chain: Outer-membrane lipoprotein LolB (208 aa).

An N-terminal signal peptide occupies residues 1 to 17 (MIRRLLGVALLTGAITG). The N-palmitoyl cysteine moiety is linked to residue Cys18. The S-diacylglycerol cysteine moiety is linked to residue Cys18.

The protein belongs to the LolB family. In terms of assembly, monomer.

The protein localises to the cell outer membrane. In terms of biological role, plays a critical role in the incorporation of lipoproteins in the outer membrane after they are released by the LolA protein. The sequence is that of Outer-membrane lipoprotein LolB from Marinobacter nauticus (strain ATCC 700491 / DSM 11845 / VT8) (Marinobacter aquaeolei).